The following is a 341-amino-acid chain: UDP-glucuronic acid decarboxylase 5 (341 aa).

Positions 1 to 21 (MASSDKQTSPKPPPSPSPLRN) are disordered. Residue 60–85 (DNYFTGSKDNLKKWIGHPRFELIRHD) participates in NAD(+) binding. Position 169 (arginine 169) interacts with substrate. Residue tyrosine 172 is the Proton acceptor of the active site. 172-176 (YDEGK) is a binding site for NAD(+). Asparagine 201 provides a ligand contact to substrate. Residue arginine 213 participates in NAD(+) binding. Substrate contacts are provided by residues 214-218 (VVSNF), 231-238 (QKPGTQTR), and 298-302 (DPRQR).

Belongs to the NAD(P)-dependent epimerase/dehydratase family. UDP-glucuronic acid decarboxylase subfamily. The cofactor is NAD(+).

The protein localises to the cytoplasm. It carries out the reaction UDP-alpha-D-glucuronate + H(+) = UDP-alpha-D-xylose + CO2. It participates in nucleotide-sugar biosynthesis; UDP-alpha-D-xylose biosynthesis; UDP-alpha-D-xylose from UDP-alpha-D-glucuronate: step 1/1. Functionally, catalyzes the NAD-dependent decarboxylation of UDP-glucuronic acid to UDP-xylose. Necessary for the biosynthesis of the core tetrasaccharide in glycosaminoglycan biosynthesis. The sequence is that of UDP-glucuronic acid decarboxylase 5 (UXS5) from Arabidopsis thaliana (Mouse-ear cress).